Reading from the N-terminus, the 243-residue chain is Ribosomal RNA small subunit methyltransferase G (243 aa).

S-adenosyl-L-methionine contacts are provided by residues Gly79, Phe84, 130–131 (AE), and Arg150. Positions 222-243 (KPTPNKYPRKPGIPNKQPLGGA) are disordered.

It belongs to the methyltransferase superfamily. RNA methyltransferase RsmG family.

The protein localises to the cytoplasm. Functionally, specifically methylates the N7 position of a guanine in 16S rRNA. This Lacticaseibacillus paracasei (strain ATCC 334 / BCRC 17002 / CCUG 31169 / CIP 107868 / KCTC 3260 / NRRL B-441) (Lactobacillus paracasei) protein is Ribosomal RNA small subunit methyltransferase G.